The primary structure comprises 794 residues: uncharacterized protein (794 aa).

The next 9 membrane-spanning stretches (helical) occupy residues 34 to 54, 67 to 87, 99 to 119, 132 to 152, 257 to 277, 283 to 303, 315 to 335, 353 to 373, and 421 to 441; these read FSAS…VFAV, ITAA…AHLI, MLAD…AFAS, LFLF…ADVT, VGPS…AMGL, LAWI…MFQL, WSVN…VLVF, LGAL…ATLF, and WTGT…LMGV.

It localises to the cell membrane. This is an uncharacterized protein from Corynebacterium glutamicum (strain ATCC 13032 / DSM 20300 / JCM 1318 / BCRC 11384 / CCUG 27702 / LMG 3730 / NBRC 12168 / NCIMB 10025 / NRRL B-2784 / 534).